Here is a 124-residue protein sequence, read N- to C-terminus: MKVLILVLLGVVILQAAPIRKLEDLLPTRYPPEHELVYWCTYANQCDFCWECVHGICRNRIQADWPVIHQNDWIINCTVSRWNGICSYYEGPRNHTDHQMDCANPTSHTYPHREYMKIYERDDL.

The N-terminal stretch at 1 to 16 (MKVLILVLLGVVILQA) is a signal peptide. Residues asparagine 76 and asparagine 94 are each glycosylated (N-linked (GlcNAc...) asparagine; by host).

It belongs to the asfivirus MGF 110 family.

Its function is as follows. Plays a role in virus cell tropism, and may be required for efficient virus replication in macrophages. This is Protein MGF 110-8L from Ornithodoros (relapsing fever ticks).